The sequence spans 707 residues: Terpene cyclase/mutase atnI (707 aa).

Over residues 1–20 (MGQHIASSESSTNGHVSLET) the composition is skewed to polar residues. The tract at residues 1–22 (MGQHIASSESSTNGHVSLETNG) is disordered. PFTB repeat units lie at residues 130-173 (AVEI…RLLG), 494-535 (LRDA…VGKT), 571-608 (TAQG…ETLA), and 620-661 (SRRG…VQTA).

The protein belongs to the terpene cyclase/mutase family.

The protein operates within secondary metabolite biosynthesis; terpenoid biosynthesis. Functionally, terpene cyclase/mutase; part of the gene cluster that mediates the biosynthesis of the meroterpenoids arthripenoids. The pathway begins with the HR-PKS atnH that catalyzes two chain-extension steps to form a reduced triketide, which then primes the SAT domain in the NR-PKS atnG to initiate three more cycles of extension to give a linear hexaketide corresponding to the polyketide part of arthripenoids. The FAD-dependent monooxygenase atnJ then performs an oxidative decarboxylation at C11 of the atnH/atnG product, via an electrophilic aromatic hydroxylation with concomitant ipso-decarboxylation. The membrane-bound polyprenyl transferase atnF then introduces a farnesyl group before the FAD-dependent monooxygenase atnK functions as the first epoxidase on terminal C12'-C13' olefin, followed by a second epoxidation on C7'-C8' catalyzed by atnA. The terpene cyclase/mutase atnI then initiates the sequential tricyclic ring formation through protonation of the terminal epoxide and catalyzes the regioselective and stereoselective 6/6/6-tricyclic ring formation. The cytochrome P450 monooxygenase atnM is responsible for hydroxylating both C1' and C10'. The next steps may involve ketoreduction and acetyl transfer by the ketoreductase atnB and the acetyltransferase atnC, and lead to the production of arthripenoid B, the final biosynthetic product of the atn cluster. The hydroquinone moiety in arthripenoid B is prone to undergo spontaneous oxidation to afford a benzoquinone compound, a key intermediate for generating structure diversity. For instance, addition of a cysteine followed by ring contraction gives arthripenoid A, tautomerization gives the main product arthripenoid C, addition of a molecular of water or amine affords arthripenoid D or E, respectively, and loss of one water forms arthripenoid F. This chain is Terpene cyclase/mutase atnI, found in Arthrinium sp.